We begin with the raw amino-acid sequence, 916 residues long: Chitin synthase B (916 aa).

Disordered stretches follow at residues 1–75 (MAYH…GYSL) and 118–141 (ARSETSSTEAWRQRQAGAAGGGNG). A compositionally biased stretch (basic and acidic residues) spans 14–26 (HTYDDGHQLRDLS). Positions 59-75 (RGLTASPVQRPTSGYSL) are enriched in polar residues. Transmembrane regions (helical) follow at residues 544–561 (RWLNGSFAAGIYSLMHFG), 588–608 (FLTWFSLASYWLTTSVIMDLV), 629–649 (IINTLVKYIYLAFLLLQFILA), 664–684 (SFVAFGIIQLYVVVDALYLVV), 716–736 (IIIIALAATFGLYFVASFMYL), 845–865 (LVTLWLFSNGLLAVCITSEGL), and 884–904 (ALLWSNAVVALIRFIGATWFL).

The protein belongs to the chitin synthase family. Class III subfamily. Interacts with kibesin kinA. In terms of processing, activity requires trypsin activation, suggesting a zymogenic nature. Phosphorylated at yet unidentified residues in a N-terminal disordered region-dependent manner.

The protein resides in the cell membrane. It localises to the cell tip. The protein localises to the cell septum. It carries out the reaction [(1-&gt;4)-N-acetyl-beta-D-glucosaminyl](n) + UDP-N-acetyl-alpha-D-glucosamine = [(1-&gt;4)-N-acetyl-beta-D-glucosaminyl](n+1) + UDP + H(+). Activity is stimulated by Mg(2+) and is inhibited by polyoxin D. Its function is as follows. Polymerizes chitin, a structural polymer of the cell wall and septum, by transferring the sugar moiety of UDP-GlcNAc to the non-reducing end of the growing chitin polymer. Does not substantially contribute to the rigidity of the cell wall but is necessary for normal hyphal growth and organization. In addition to its functions in the formation of normal cell walls of hyphae, is also involved in conidiophore and conidia development. This chain is Chitin synthase B, found in Emericella nidulans (strain FGSC A4 / ATCC 38163 / CBS 112.46 / NRRL 194 / M139) (Aspergillus nidulans).